The chain runs to 308 residues: Methionyl-tRNA formyltransferase (308 aa).

(6S)-5,6,7,8-tetrahydrofolate is bound at residue 109–112 (SLLP).

Belongs to the Fmt family.

The catalysed reaction is L-methionyl-tRNA(fMet) + (6R)-10-formyltetrahydrofolate = N-formyl-L-methionyl-tRNA(fMet) + (6S)-5,6,7,8-tetrahydrofolate + H(+). Attaches a formyl group to the free amino group of methionyl-tRNA(fMet). The formyl group appears to play a dual role in the initiator identity of N-formylmethionyl-tRNA by promoting its recognition by IF2 and preventing the misappropriation of this tRNA by the elongation apparatus. The protein is Methionyl-tRNA formyltransferase of Methylobacillus flagellatus (strain ATCC 51484 / DSM 6875 / VKM B-1610 / KT).